A 691-amino-acid polypeptide reads, in one-letter code: Calcium-binding and coiled-coil domain-containing protein 1 (691 aa).

The p300 KIX-binding stretch occupies residues 1–30 (MEESPLSRAPSRGGVNFLNVARTYIPNTKV). Residues 1 to 190 (MEESPLSRAP…VQELERALAT (190 aa)) form an N-terminal AD (CTNNB1 binding site) region. Phosphoserine is present on Ser4. Positions 45–125 (SDWIGIFKVE…FQFREPRPMD (81 aa)) are interaction with GATA1. 3 coiled-coil regions span residues 145–205 (KATV…YKGI), 232–339 (ELED…AELE), and 417–514 (QSVE…ADEK). The segment at 501-691 (RKLEARLEKV…FSTQDPFTFE (191 aa)) is C-terminal AD (CTNNB1 binding site); interaction with CCAR1. The tract at residues 513-604 (EKWNEDATTE…SDSEAEDEKS (92 aa)) is disordered. The UBZ1-type zinc-finger motif lies at 653–679 (WKECPICKERFPAESDKDALEDHMDGH). Cys656, Cys659, His675, and His679 together coordinate Zn(2+).

It belongs to the CALCOCO family. As to quaternary structure, part of a calphoglin complex consisting of CALCOCO1, PPA1 and PGM. Interacts with the bHLH-PAS domains of GRIP1, AHR and ARNT. Interacts with CTNNB1 via both its N- and C-terminal regions. Interacts with EP300. Interacts with CCAR1 (via N-terminus) and GATA1.

It localises to the cytoplasm. Its subcellular location is the nucleus. Functionally, functions as a coactivator for aryl hydrocarbon and nuclear receptors (NR). Recruited to promoters through its contact with the N-terminal basic helix-loop-helix-Per-Arnt-Sim (PAS) domain of transcription factors or coactivators, such as NCOA2. During ER-activation acts synergistically in combination with other NCOA2-binding proteins, such as EP300, CREBBP and CARM1. Involved in the transcriptional activation of target genes in the Wnt/CTNNB1 pathway. Functions as a secondary coactivator in LEF1-mediated transcriptional activation via its interaction with CTNNB1. Coactivator function for nuclear receptors and LEF1/CTNNB1 involves differential utilization of two different activation regions. In association with CCAR1 enhances GATA1- and MED1-mediated transcriptional activation from the gamma-globin promoter during erythroid differentiation of K562 erythroleukemia cells. In terms of biological role, seems to enhance inorganic pyrophosphatase thus activating phosphogluomutase (PMG). Probably functions as a component of the calphoglin complex, which is involved in linking cellular metabolism (phosphate and glucose metabolism) with other core functions including protein synthesis and degradation, calcium signaling and cell growth. This is Calcium-binding and coiled-coil domain-containing protein 1 (CALCOCO1) from Pongo abelii (Sumatran orangutan).